Here is a 281-residue protein sequence, read N- to C-terminus: HTH-type transcriptional activator RhaR (281 aa).

Residues 178–276 enclose the HTH araC/xylS-type domain; sequence DKLLAALAAS…GMSPGQWRQR (99 aa). 2 DNA-binding regions (H-T-H motif) span residues 195 to 216 and 243 to 266; these read ERFC…RQQT and IGDI…SREI.

As to quaternary structure, binds DNA as a dimer.

Its subcellular location is the cytoplasm. Functionally, activates expression of the rhaSR operon in response to L-rhamnose. The chain is HTH-type transcriptional activator RhaR from Klebsiella pneumoniae subsp. pneumoniae (strain ATCC 700721 / MGH 78578).